A 367-amino-acid chain; its full sequence is Cytochrome b (367 aa).

4 helical membrane passes run 20 to 40 (MGSI…LLSM), 64 to 85 (WFLR…YAHI), 101 to 121 (WMVG…GYVL), and 166 to 186 (FFSL…LHII). 2 residues coordinate heme b: histidine 70 and histidine 84. Residues histidine 170 and histidine 184 each contribute to the heme b site. Histidine 189 contacts a ubiquinone. The next 4 membrane-spanning stretches (helical) occupy residues 214–234 (IKDS…TFFS), 276–296 (LGGV…PLSS), 308–328 (IYQV…WLGA), and 335–355 (YLSL…LLGM).

It belongs to the cytochrome b family. As to quaternary structure, the main subunits of complex b-c1 are: cytochrome b, cytochrome c1 and the Rieske protein. Requires heme b as cofactor.

Its subcellular location is the mitochondrion inner membrane. Its function is as follows. Component of the ubiquinol-cytochrome c reductase complex (complex III or cytochrome b-c1 complex) that is part of the mitochondrial respiratory chain. The b-c1 complex mediates electron transfer from ubiquinol to cytochrome c. Contributes to the generation of a proton gradient across the mitochondrial membrane that is then used for ATP synthesis. This Albinaria caerulea (Land snail) protein is Cytochrome b (MT-CYB).